The primary structure comprises 245 residues: Zinc finger protein 575 (245 aa).

A disordered region spans residues 1–67 (MLERGAESAA…PPQRPHRCPD (67 aa)). Low complexity predominate over residues 36 to 49 (PSQSAPGPTASAGS). Over residues 52-63 (RPRRRPPPQRPH) the composition is skewed to basic residues. 6 C2H2-type zinc fingers span residues 63–85 (HRCPDCDKAFSYPSKLATHRLAH), 91–113 (HPCPDCPKAFSYPSKLAAHRLTH), 119–141 (HPCPHCPKSFGHRSKLAAHLWTH), 147–169 (YPCPDCPKSFCYPSKLAAHRHTH), 177–199 (YPCPHCPKAFSFPSKLAAHRLCH), and 213–240 (HRCSSCGQAFGQRRLLLLHQRSHHQVEH).

It belongs to the krueppel C2H2-type zinc-finger protein family.

It localises to the nucleus. Functionally, may be involved in transcriptional regulation. The chain is Zinc finger protein 575 (ZNF575) from Homo sapiens (Human).